Consider the following 253-residue polypeptide: Aspartate/glutamate leucyltransferase (253 aa).

The protein belongs to the R-transferase family. Bpt subfamily.

Its subcellular location is the cytoplasm. It catalyses the reaction N-terminal L-glutamyl-[protein] + L-leucyl-tRNA(Leu) = N-terminal L-leucyl-L-glutamyl-[protein] + tRNA(Leu) + H(+). The catalysed reaction is N-terminal L-aspartyl-[protein] + L-leucyl-tRNA(Leu) = N-terminal L-leucyl-L-aspartyl-[protein] + tRNA(Leu) + H(+). In terms of biological role, functions in the N-end rule pathway of protein degradation where it conjugates Leu from its aminoacyl-tRNA to the N-termini of proteins containing an N-terminal aspartate or glutamate. The sequence is that of Aspartate/glutamate leucyltransferase from Allorhizobium ampelinum (strain ATCC BAA-846 / DSM 112012 / S4) (Agrobacterium vitis (strain S4)).